Here is a 534-residue protein sequence, read N- to C-terminus: CTP synthase (534 aa).

The tract at residues 1-269 (MHVSNSKFIF…DKIIIDAFRL (269 aa)) is amidoligase domain. Serine 17 provides a ligand contact to CTP. Serine 17 is a UTP binding site. 18-23 (SLGKGV) contacts ATP. L-glutamine is bound at residue tyrosine 58. Aspartate 75 contributes to the ATP binding site. 2 residues coordinate Mg(2+): aspartate 75 and glutamate 143. CTP is bound by residues 150-152 (DIE), 190-195 (KTKPTQ), and lysine 226. UTP is bound by residues 190 to 195 (KTKPTQ) and lysine 226. A Glutamine amidotransferase type-1 domain is found at 294-532 (DIAIVGKYIK…IENAYIYKKE (239 aa)). Glycine 352 is an L-glutamine binding site. Catalysis depends on cysteine 379, which acts as the Nucleophile; for glutamine hydrolysis. L-glutamine is bound by residues 380 to 383 (LGMQ), glutamate 403, and arginine 460. Residues histidine 505 and glutamate 507 contribute to the active site.

The protein belongs to the CTP synthase family. Homotetramer.

The catalysed reaction is UTP + L-glutamine + ATP + H2O = CTP + L-glutamate + ADP + phosphate + 2 H(+). It carries out the reaction L-glutamine + H2O = L-glutamate + NH4(+). The enzyme catalyses UTP + NH4(+) + ATP = CTP + ADP + phosphate + 2 H(+). It functions in the pathway pyrimidine metabolism; CTP biosynthesis via de novo pathway; CTP from UDP: step 2/2. Allosterically activated by GTP, when glutamine is the substrate; GTP has no effect on the reaction when ammonia is the substrate. The allosteric effector GTP functions by stabilizing the protein conformation that binds the tetrahedral intermediate(s) formed during glutamine hydrolysis. Inhibited by the product CTP, via allosteric rather than competitive inhibition. Its function is as follows. Catalyzes the ATP-dependent amination of UTP to CTP with either L-glutamine or ammonia as the source of nitrogen. Regulates intracellular CTP levels through interactions with the four ribonucleotide triphosphates. This chain is CTP synthase, found in Hydrogenobaculum sp. (strain Y04AAS1).